The primary structure comprises 207 residues: Na(+)-translocating ferredoxin:NAD(+) oxidoreductase complex subunit G (207 aa).

The chain crosses the membrane as a helical span at residues 18–38 (GLILFVISAVAACALALTNYV). T185 is modified (FMN phosphoryl threonine).

Belongs to the RnfG family. As to quaternary structure, the complex is composed of six subunits: RnfA, RnfB, RnfC, RnfD, RnfE and RnfG. The cofactor is FMN.

Its subcellular location is the cell membrane. The enzyme catalyses 2 reduced [2Fe-2S]-[ferredoxin] + Na(+)(in) + NAD(+) + H(+) = 2 oxidized [2Fe-2S]-[ferredoxin] + Na(+)(out) + NADH. In terms of biological role, part of a membrane-bound complex that couples electron transfer with translocation of ions across the membrane. Couples electron transfer from reduced ferredoxin to NAD(+) with electrogenic movement of Na(+) out of the cell. Involved in caffeate respiration. The protein is Na(+)-translocating ferredoxin:NAD(+) oxidoreductase complex subunit G of Acetobacterium woodii (strain ATCC 29683 / DSM 1030 / JCM 2381 / KCTC 1655 / WB1).